Here is a 251-residue protein sequence, read N- to C-terminus: Malonyl-[acyl-carrier protein] O-methyltransferase (251 aa).

This sequence belongs to the methyltransferase superfamily.

It carries out the reaction malonyl-[ACP] + S-adenosyl-L-methionine = malonyl-[ACP] methyl ester + S-adenosyl-L-homocysteine. It functions in the pathway cofactor biosynthesis; biotin biosynthesis. Its function is as follows. Converts the free carboxyl group of a malonyl-thioester to its methyl ester by transfer of a methyl group from S-adenosyl-L-methionine (SAM). It allows to synthesize pimeloyl-ACP via the fatty acid synthetic pathway. The protein is Malonyl-[acyl-carrier protein] O-methyltransferase of Erwinia billingiae (strain Eb661).